The following is a 211-amino-acid chain: Protein-L-isoaspartate O-methyltransferase (211 aa).

S60 is an active-site residue.

Belongs to the methyltransferase superfamily. L-isoaspartyl/D-aspartyl protein methyltransferase family.

Its subcellular location is the cytoplasm. It catalyses the reaction [protein]-L-isoaspartate + S-adenosyl-L-methionine = [protein]-L-isoaspartate alpha-methyl ester + S-adenosyl-L-homocysteine. Catalyzes the methyl esterification of L-isoaspartyl residues in peptides and proteins that result from spontaneous decomposition of normal L-aspartyl and L-asparaginyl residues. It plays a role in the repair and/or degradation of damaged proteins. The polypeptide is Protein-L-isoaspartate O-methyltransferase (Pseudomonas aeruginosa (strain LESB58)).